Reading from the N-terminus, the 94-residue chain is Phormicin (94 aa).

The N-terminal stretch at 1–23 (MKFFMVFVVTFCLAVCFVSQSLA) is a signal peptide. A propeptide spanning residues 24 to 54 (IPADAANDAHFVDGVQALKEIEPELHGRYKR) is cleaved from the precursor. 3 disulfides stabilise this stretch: cysteine 57–cysteine 84, cysteine 70–cysteine 90, and cysteine 74–cysteine 92.

This sequence belongs to the invertebrate defensin family. Type 1 subfamily.

It is found in the secreted. Its function is as follows. Responsible for the anti Gram-positive activity of immune hemolymph of P.terraenovae. The sequence is that of Phormicin from Protophormia terraenovae (Northern blowfly).